The sequence spans 234 residues: Large ribosomal subunit protein uL1 (234 aa).

Belongs to the universal ribosomal protein uL1 family. In terms of assembly, part of the 50S ribosomal subunit.

Binds directly to 23S rRNA. The L1 stalk is quite mobile in the ribosome, and is involved in E site tRNA release. In terms of biological role, protein L1 is also a translational repressor protein, it controls the translation of the L11 operon by binding to its mRNA. This chain is Large ribosomal subunit protein uL1, found in Helicobacter pylori (strain G27).